Reading from the N-terminus, the 105-residue chain is Vacuolar ATPase assembly integral membrane protein VMA21 homolog (105 aa).

Residues methionine 1 to serine 26 are disordered. At methionine 1–leucine 36 the chain is on the cytoplasmic side. Residues phenylalanine 37 to valine 57 traverse the membrane as a helical segment. The Lumenal portion of the chain corresponds to leucine 58–lysine 68. A helical membrane pass occupies residues valine 69–isoleucine 89. Residues tyrosine 90 to aspartate 105 lie on the Cytoplasmic side of the membrane.

The protein belongs to the VMA21 family.

Its subcellular location is the endoplasmic reticulum membrane. The protein localises to the endoplasmic reticulum-Golgi intermediate compartment membrane. It localises to the cytoplasmic vesicle. The protein resides in the COPII-coated vesicle membrane. Required for the assembly of the V0 complex of the vacuolar ATPase (V-ATPase) in the endoplasmic reticulum. In Drosophila erecta (Fruit fly), this protein is Vacuolar ATPase assembly integral membrane protein VMA21 homolog.